Reading from the N-terminus, the 644-residue chain is Exoribonuclease 2 (644 aa).

Residues 189 to 516 (RQDLTALNFV…NHRLLKAVIK (328 aa)) form the RNB domain. An S1 motif domain is found at 561–643 (NTRFAAEIID…ETRSIIARPA (83 aa)).

The protein belongs to the RNR ribonuclease family. RNase II subfamily.

Its subcellular location is the cytoplasm. The enzyme catalyses Exonucleolytic cleavage in the 3'- to 5'-direction to yield nucleoside 5'-phosphates.. In terms of biological role, involved in mRNA degradation. Hydrolyzes single-stranded polyribonucleotides processively in the 3' to 5' direction. In Salmonella newport (strain SL254), this protein is Exoribonuclease 2.